A 296-amino-acid polypeptide reads, in one-letter code: Probable xyloglucan endotransglucosylase/hydrolase 1 (296 aa).

Residues 1–22 form the signal peptide; sequence MGIIKGVLFSIVLINLSLVVFC. Positions 23–221 constitute a GH16 domain; the sequence is GYPRRPVDVP…WANAPFTASY (199 aa). The Nucleophile role is filled by E107. Catalysis depends on E111, which acts as the Proton donor. Xyloglucan is bound at residue E111. N-linked (GlcNAc...) asparagine glycosylation is present at N115. Xyloglucan is bound by residues 124–126, 134–136, 200–201, and G205; these read QTN, NRE, and DW. Intrachain disulfides connect C229-C240 and C277-C290. R282 is a binding site for xyloglucan.

It belongs to the glycosyl hydrolase 16 family. XTH group 1 subfamily. In terms of processing, contains at least one intrachain disulfide bond essential for its enzymatic activity.

Its subcellular location is the secreted. It is found in the cell wall. It localises to the extracellular space. The protein resides in the apoplast. The catalysed reaction is breaks a beta-(1-&gt;4) bond in the backbone of a xyloglucan and transfers the xyloglucanyl segment on to O-4 of the non-reducing terminal glucose residue of an acceptor, which can be a xyloglucan or an oligosaccharide of xyloglucan.. In terms of biological role, catalyzes xyloglucan endohydrolysis (XEH) and/or endotransglycosylation (XET). Cleaves and religates xyloglucan polymers, an essential constituent of the primary cell wall, and thereby participates in cell wall construction of growing tissues. The protein is Probable xyloglucan endotransglucosylase/hydrolase 1 (XTH1) of Solanum lycopersicum (Tomato).